A 20-amino-acid polypeptide reads, in one-letter code: Short cationic peptide-3a (20 aa).

Glu20 carries the post-translational modification Glutamic acid 1-amide.

In terms of tissue distribution, expressed by the venom gland.

The protein resides in the secreted. In Cupiennius salei (American wandering spider), this protein is Short cationic peptide-3a.